The following is a 93-amino-acid chain: Pyrimidine/purine nucleoside phosphorylase (93 aa).

It belongs to the nucleoside phosphorylase PpnP family.

It catalyses the reaction a purine D-ribonucleoside + phosphate = a purine nucleobase + alpha-D-ribose 1-phosphate. The catalysed reaction is adenosine + phosphate = alpha-D-ribose 1-phosphate + adenine. The enzyme catalyses cytidine + phosphate = cytosine + alpha-D-ribose 1-phosphate. It carries out the reaction guanosine + phosphate = alpha-D-ribose 1-phosphate + guanine. It catalyses the reaction inosine + phosphate = alpha-D-ribose 1-phosphate + hypoxanthine. The catalysed reaction is thymidine + phosphate = 2-deoxy-alpha-D-ribose 1-phosphate + thymine. The enzyme catalyses uridine + phosphate = alpha-D-ribose 1-phosphate + uracil. It carries out the reaction xanthosine + phosphate = alpha-D-ribose 1-phosphate + xanthine. Functionally, catalyzes the phosphorolysis of diverse nucleosides, yielding D-ribose 1-phosphate and the respective free bases. Can use uridine, adenosine, guanosine, cytidine, thymidine, inosine and xanthosine as substrates. Also catalyzes the reverse reactions. This Marinobacter nauticus (strain ATCC 700491 / DSM 11845 / VT8) (Marinobacter aquaeolei) protein is Pyrimidine/purine nucleoside phosphorylase.